Consider the following 208-residue polypeptide: N-(5'-phosphoribosyl)anthranilate isomerase (208 aa).

Belongs to the TrpF family.

The catalysed reaction is N-(5-phospho-beta-D-ribosyl)anthranilate = 1-(2-carboxyphenylamino)-1-deoxy-D-ribulose 5-phosphate. The protein operates within amino-acid biosynthesis; L-tryptophan biosynthesis; L-tryptophan from chorismate: step 3/5. This Desulforamulus reducens (strain ATCC BAA-1160 / DSM 100696 / MI-1) (Desulfotomaculum reducens) protein is N-(5'-phosphoribosyl)anthranilate isomerase.